The chain runs to 210 residues: Cytochrome c oxidase subunit 2 (210 aa).

Residues 1 to 20 lie on the Mitochondrial intermembrane side of the membrane; the sequence is MAFILSFWMIFLLDSVIVLL. A helical transmembrane segment spans residues 21-42; the sequence is SFVCFVCVWICALLFSTVLLVS. The Mitochondrial matrix portion of the chain corresponds to 43–60; the sequence is KLNNIYCTWDFTASKFID. Residues 61 to 86 traverse the membrane as a helical segment; the sequence is VYWFTIGGMFSLGLLLRLCLLLYFGH. Over 87–210 the chain is Mitochondrial intermembrane; sequence LNFVSFDLCK…GFMPIVICFI (124 aa). Cu cation contacts are provided by His157, Cys192, Glu194, Cys196, His200, and Met203. Glu194 contacts Mg(2+).

Belongs to the cytochrome c oxidase subunit 2 family. As to quaternary structure, component of the cytochrome c oxidase (complex IV, CIV), a multisubunit enzyme composed of a catalytic core of 3 subunits and several supernumerary subunits. The complex exists as a monomer or a dimer and forms supercomplexes (SCs) in the inner mitochondrial membrane with ubiquinol-cytochrome c oxidoreductase (cytochrome b-c1 complex, complex III, CIII). Cu cation is required as a cofactor.

It localises to the mitochondrion inner membrane. It carries out the reaction 4 Fe(II)-[cytochrome c] + O2 + 8 H(+)(in) = 4 Fe(III)-[cytochrome c] + 2 H2O + 4 H(+)(out). Component of the cytochrome c oxidase, the last enzyme in the mitochondrial electron transport chain which drives oxidative phosphorylation. The respiratory chain contains 3 multisubunit complexes succinate dehydrogenase (complex II, CII), ubiquinol-cytochrome c oxidoreductase (cytochrome b-c1 complex, complex III, CIII) and cytochrome c oxidase (complex IV, CIV), that cooperate to transfer electrons derived from NADH and succinate to molecular oxygen, creating an electrochemical gradient over the inner membrane that drives transmembrane transport and the ATP synthase. Cytochrome c oxidase is the component of the respiratory chain that catalyzes the reduction of oxygen to water. Electrons originating from reduced cytochrome c in the intermembrane space (IMS) are transferred via the dinuclear copper A center (CU(A)) of subunit 2 and heme A of subunit 1 to the active site in subunit 1, a binuclear center (BNC) formed by heme A3 and copper B (CU(B)). The BNC reduces molecular oxygen to 2 water molecules using 4 electrons from cytochrome c in the IMS and 4 protons from the mitochondrial matrix. The polypeptide is Cytochrome c oxidase subunit 2 (Leishmania tarentolae (Sauroleishmania tarentolae)).